Reading from the N-terminus, the 201-residue chain is Receptor expression-enhancing protein 6 (201 aa).

Helical transmembrane passes span 36 to 56 (LAAG…GASL), 89 to 109 (WVVY…LFWF), and 117 to 137 (CAFL…LLYH).

This sequence belongs to the DP1 family. Interacts with STX3. Interacts with clathrin. In terms of tissue distribution, expressed in the inner segment of rod photoreceptors and outer plexiform layer of the retina (at protein level). Expressed in liver, but not detected in brain, muscle, kidney, retinal cone photoreceptors or retinal ganglion cells (at protein level). Highly expressed in the ganglion cell layer of the retina and in liver, and also detected at low levels in kidney and testis. Isoform 1: Expressed in the retina. Isoform 2: Expressed in liver.

The protein localises to the endoplasmic reticulum membrane. Its subcellular location is the cytoplasmic vesicle. It localises to the clathrin-coated vesicle membrane. In terms of biological role, required for correct function and survival of retinal photoreceptors. Required for retinal development. In rod photoreceptors, facilitates stability and/or trafficking of guanylate cyclases and is required to maintain endoplasmic reticulum and mitochondrial homeostasis. May play a role in clathrin-coated intracellular vesicle trafficking of proteins from the endoplasmic reticulum to the retinal rod plasma membrane. This is Receptor expression-enhancing protein 6 (Reep6) from Mus musculus (Mouse).